A 675-amino-acid polypeptide reads, in one-letter code: TOM1-like protein 9 (675 aa).

The 130-residue stretch at 9 to 138 folds into the VHS domain; the sequence is ATSEMLIGPD…ELLRAGAVFP (130 aa). Disordered stretches follow at residues 144 to 181, 270 to 322, 371 to 524, 542 to 561, and 622 to 675; these read SAPV…EPEF, LPGT…QLAL, FSDN…YAQM, QNGV…GYQP, and RDQT…AGTM. Residues 180–268 enclose the GAT domain; sequence EFPTLSLSEI…VLTNYEAIAS (89 aa). Composition is skewed to polar residues over residues 299-317 and 372-435; these read GDSS…NGVL and SDNT…GQGV. Residues 436-451 show a composition bias toward low complexity; it reads SSPWSSQPAQQPVQPS. Polar residues-rich tracts occupy residues 470-481 and 488-524; these read QDYSPSAESGSP and PTQT…YAQM. Basic and acidic residues predominate over residues 646-661; that stretch reads NKPEDKLFGDLVDISK.

Belongs to the TOM1 family. In terms of assembly, interacts with ELC/VPS23A and ELCL/VPS23B. As to expression, ubiquitously expressed.

It localises to the cytoplasm. The protein resides in the membrane. In terms of biological role, might contribute to the loading of the ESCRT machinery. In Arabidopsis thaliana (Mouse-ear cress), this protein is TOM1-like protein 9.